The chain runs to 66 residues: Toxin NaTx-4 (66 aa).

Residues 1–64 form the LCN-type CS-alpha/beta domain; that stretch reads KEGYLVNKET…TFPIPGKTCS (64 aa). Cystine bridges form between cysteine 12/cysteine 63, cysteine 16/cysteine 39, cysteine 25/cysteine 44, and cysteine 29/cysteine 46.

This sequence belongs to the long (4 C-C) scorpion toxin superfamily. Sodium channel inhibitor family. Expressed by the venom gland.

The protein localises to the secreted. Probable sodium channel inhibitor. In Centruroides sculpturatus (Arizona bark scorpion), this protein is Toxin NaTx-4.